The primary structure comprises 558 residues: Formate--tetrahydrofolate ligase (558 aa).

ATP is bound at residue 66–73 (TPAGEGKT).

This sequence belongs to the formate--tetrahydrofolate ligase family.

The enzyme catalyses (6S)-5,6,7,8-tetrahydrofolate + formate + ATP = (6R)-10-formyltetrahydrofolate + ADP + phosphate. Its pathway is one-carbon metabolism; tetrahydrofolate interconversion. The polypeptide is Formate--tetrahydrofolate ligase (Neisseria gonorrhoeae (strain NCCP11945)).